Consider the following 497-residue polypeptide: Guanosine-5'-triphosphate,3'-diphosphate pyrophosphatase (497 aa).

It belongs to the GppA/Ppx family. GppA subfamily.

The enzyme catalyses guanosine 3'-diphosphate 5'-triphosphate + H2O = guanosine 3',5'-bis(diphosphate) + phosphate + H(+). It functions in the pathway purine metabolism; ppGpp biosynthesis; ppGpp from GTP: step 2/2. In terms of biological role, catalyzes the conversion of pppGpp to ppGpp. Guanosine pentaphosphate (pppGpp) is a cytoplasmic signaling molecule which together with ppGpp controls the 'stringent response', an adaptive process that allows bacteria to respond to amino acid starvation, resulting in the coordinated regulation of numerous cellular activities. The chain is Guanosine-5'-triphosphate,3'-diphosphate pyrophosphatase from Aliivibrio fischeri (strain ATCC 700601 / ES114) (Vibrio fischeri).